The primary structure comprises 134 residues: Large ribosomal subunit protein eL32 (134 aa).

The protein belongs to the eukaryotic ribosomal protein eL32 family.

The chain is Large ribosomal subunit protein eL32 (rpl32e) from Picrophilus torridus (strain ATCC 700027 / DSM 9790 / JCM 10055 / NBRC 100828 / KAW 2/3).